Consider the following 208-residue polypeptide: Sodium/potassium-transporting ATPase subunit beta-1-interacting protein 2 (208 aa).

A run of 4 helical transmembrane segments spans residues 1–23 (MGYC…CVLE), 35–55 (APIL…FGTI), 64–84 (GYAV…CFYL), and 148–168 (VAHS…ACYV).

It belongs to the NKAIN family. As to quaternary structure, interacts with ATP1B1. Detected in the brain only and specifically in neurons; expressed in multiple regions such as cerebral cortex, thalamus, cerebellum, olfactory bulb and brainstem, but not in the hippocampus.

Its subcellular location is the cell membrane. The polypeptide is Sodium/potassium-transporting ATPase subunit beta-1-interacting protein 2 (Nkain2) (Mus musculus (Mouse)).